The chain runs to 485 residues: WD repeat-containing protein 13 (485 aa).

Met1 carries the post-translational modification N-acetylmethionine. Phosphoserine occurs at positions 70, 74, and 79. An Asymmetric dimethylarginine; alternate modification is found at Arg114. Arg114 bears the Omega-N-methylarginine; alternate mark. WD repeat units lie at residues 162–202 (GMYH…LCQL), 208–246 (TVLR…IWAS), 250–290 (RCIR…VMNI), 295–335 (KVKG…LFDM), 341–389 (TKAK…VVDN), 394–438 (QLKR…FFDV), and 444–482 (AAVN…VWRR).

As to expression, widely expressed.

It is found in the nucleus. This Homo sapiens (Human) protein is WD repeat-containing protein 13 (WDR13).